A 1881-amino-acid chain; its full sequence is Ankyrin-1 (1881 aa).

Positions 1–827 are 89 kDa domain; the sequence is MPYSVGFREA…EDEGEELISF (827 aa). 23 ANK repeats span residues 44–73, 77–106, 110–139, 143–172, 174–201, 205–234, 238–267, 271–300, 304–333, 337–366, 370–399, 403–432, 436–465, 469–498, 502–531, 535–564, 568–597, 601–630, 634–663, 667–696, 700–729, 733–762, and 766–795; these read NGLNGLHLASKEGHVKMVVELLHKEIILET, KGNTALHIAALAGQDEVVRELVNYGANVNA, KGFTPLYMAAQENHLEVVKFLLENGANQNV, DGFTPLAVALQQGHENVVAHLINYGTKGKV, LPALHIAARNDDTRTAAVLLQNDPNPDV, TGFTPLHIAAHYENLNVAQLLLNRGASVNF, NGITPLHIASRRGNVIMVRLLLDRGAQIET, DELTPLHCAARNGHVRISEILLDHGAPIQA, NGLSPIHMAAQGDHLDCVRLLLQYDAEIDD, DHLTPLHVAAHCGHHRVAKVLLDKGAKPNS, NGFTPLHIACKKNHVRVMELLLKTGASIDA, SGLTPLHVASFMGHLPIVKNLLQRGASPNV, KVETPLHMAARAGHTEVAKYLLQNKAKVNA, DDQTPLHCAARIGHTNMVKLLLENNANPNL, AGHTPLHIAAREGHVETVLALLEKEASQAC, KGFTPLHVAAKYGKVRVAELLLERDAHPNA, NGLTPLHVAVHHNNLDIVKLLLPRGGSPHS, NGYTPLHIAAKQNQVEVARSLLQYGGSANA, QGVTPLHLAAQEGHAEMVALLLSKQANGNL, SGLTPLHLVAQEGHVPVADVLIKHGVMVDA, MGYTPLHVASHYGNIKLVKFLLQHQADVNA, LGYSPLHQAAQQGHTDIVTLLLKNGASPNE, and DGTTPLAIAKRLGYISVTDVLKVVTDETSF. N105 carries the post-translational modification (3S)-3-hydroxyasparagine; by HIF1AN; partial. (3S)-3-hydroxyasparagine; by HIF1AN; partial is present on N233. Phosphoserine is present on S429. A (3S)-3-hydroxyasparagine; by HIF1AN; partial mark is found at N431 and N464. N629 and N662 each carry (3S)-3-hydroxyasparagine; by HIF1AN; partial. D695 carries the (3S)-3-hydroxyaspartate; by HIF1AN; partial modification. (3S)-3-hydroxyasparagine; by HIF1AN; partial is present on N728. At S759 the chain carries Phosphoserine. (3S)-3-hydroxyasparagine; by HIF1AN; partial is present on N761. 4 positions are modified to phosphoserine: S781, S817, S834, and S856. A disordered region spans residues 875-904; the sequence is EEQEQASKEYDEDSLIPSSPATETSDNISP. Residues 890-904 show a composition bias toward polar residues; that stretch reads IPSSPATETSDNISP. 2 consecutive ZU5 domains span residues 913 to 1068 and 1070 to 1216; these read FLVS…IMSR and CQDY…LSDC. Phosphothreonine is present on T961. Y1073 is modified (phosphotyrosine). S1082 carries the post-translational modification Phosphoserine. Positions 1234–1362 are UPA domain; the sequence is TAVPYMAKFV…QHILCHLNIT (129 aa). T1378 and T1380 each carry phosphothreonine. The 55 kDa regulatory domain stretch occupies residues 1383–1881; it reads ALRYSILSES…SKDHTSTPNP (499 aa). Phosphoserine occurs at positions 1390, 1392, and 1396. T1400 bears the Phosphothreonine mark. The Death domain occupies 1403-1487; the sequence is AEMKMAVISE…EIVNMLEGSG (85 aa). A phosphoserine mark is found at S1428 and S1486. A disordered region spans residues 1486–1510; the sequence is SGRQSRNLKPDRRHTDRDYSLSPSQ. Residues 1493 to 1504 show a composition bias toward basic and acidic residues; it reads LKPDRRHTDRDY. Phosphoserine is present on residues S1523 and S1533. The disordered stretch occupies residues 1583–1613; it reads SSLECSKAEDSDATGHEWKLEGALSEEPRGP. Positions 1588 to 1612 are enriched in basic and acidic residues; sequence SKAEDSDATGHEWKLEGALSEEPRG. S1617 carries the phosphoserine modification. Disordered regions lie at residues 1637–1703, 1718–1791, and 1840–1859; these read LLEQ…LQDW, QGSW…EAKN, and ADAAQEHEEVTVEGPLEDPS. The segment covering 1642-1658 has biased composition (basic and acidic residues); sequence EGQRSEEKLPGSKRQDD. S1666, S1671, S1686, S1690, and S1696 each carry phosphoserine. Residues 1683-1694 are compositionally biased toward polar residues; it reads ITHSPTVSQVTE. Composition is skewed to polar residues over residues 1718 to 1739 and 1758 to 1771; these read QGSWQEEVTQGPHSFQGTSTMT and SEHTWTEQPEAESS. A compositionally biased stretch (basic and acidic residues) spans 1772–1781; the sequence is QADRDRRQQG.

In terms of assembly, component of the ankyrin-1 complex in the erythrocyte, composed of ANK1, RHCE, RHAG, SLC4A1, EPB42, GYPA, GYPB and AQP1. Interacts with a number of integral membrane proteins and cytoskeletal proteins. Interacts (via N-terminus) with SPTB/spectrin (beta chain). Also interacts with TTN/titin. Isoform Mu17 interacts with OBSCN isoform 3/obscurin. Interacts with HIF1AN. Interacts (via ANK 1-5 repeats) with RHCE; this interaction mediates the primary membrane attachment site for ANK1. Interacts (via ANK 1-2 repeats) with AQP1 (via the N-terminal). Interacts (via ANK 1-13 repeats) with EPB42. Interacts directly with SLC4A1 (via the cytoplasmic domain); this interaction is mediated by the SLC4A1 Band 3-II and Band 3-III dimers. In terms of processing, regulated by phosphorylation. Palmitoylated. Post-translationally, hydroxylated by HIF1AN at several asparagine and 1 aspartate residue within ANK repeat region. Hydroxylation seems to increase the conformational stability of this region and may also modulate protein-protein interactions mediated by the ANK repeat region. In terms of processing, (Microbial infection) Probably cleaved by P.falciparum SERA6; the cleavage probably causes the disruption of the actin cytoskeleton and the rupture of the erythrocyte cell membrane releasing the merozoites. As to expression, isoform Mu17, isoform Mu18, isoform Mu19 and isoform Mu20 are expressed in skeletal muscle. Isoform Br21 is expressed in brain.

It localises to the cytoplasm. The protein localises to the cytoskeleton. It is found in the membrane. Its subcellular location is the myofibril. The protein resides in the sarcomere. It localises to the m line. The protein localises to the sarcoplasmic reticulum. In terms of biological role, component of the ankyrin-1 complex, a multiprotein complex involved in the stability and shape of the erythrocyte membrane. Attaches integral membrane proteins to cytoskeletal elements; binds to the erythrocyte membrane protein band 4.2, to Na-K ATPase, to the lymphocyte membrane protein GP85, and to the cytoskeletal proteins fodrin, tubulin, vimentin and desmin. Erythrocyte ankyrins also link spectrin (beta chain) to the cytoplasmic domain of the erythrocytes anion exchange protein; they retain most or all of these binding functions. Together with obscurin in skeletal muscle may provide a molecular link between the sarcoplasmic reticulum and myofibrils. In Homo sapiens (Human), this protein is Ankyrin-1.